Consider the following 460-residue polypeptide: MQSIILIGKPNVGKSSLFNRMARQRIAITSDISGTTRDTNKTQIHIHSKKAMLIDSGGLDESDELFKNVKKNTLKVAKESDIILYLVDGKLAPDDEDRQFFYSLKKLGKPIALVINKVDNKKDEERAWEFANFGVKEIFNLSVTHNVGLDELYEWLEKFLHEEFLIPDEEENLEDFLEYYEEGKEFQFKEVDQNHIRVGIVGRVNVGKSSLLNALVKQERSVVSSIAGTTIDPVNESVVHKDKVIEFVDTAGIRKRGKIQGLERFALNRTEKILSHSQIALLVLDAHEGFNELDERIAGLVAKHYLGVIIVLNKWDKSEMDFDKTVKELRLDRFKFLAYAPVISVSALSGKRVHVLLDKILQIFENFTQKIQTSKLNTLIENATRAHPLPHDYGKLVKIYYAVQYDLAPPKIALIMNRPKALHFSYKRYLQNQIRKEFNFEGVPLVIASRKKGSKENDES.

EngA-type G domains follow at residues 2–164 (QSII…HEEF) and 196–368 (IRVG…ENFT). GTP is bound by residues 8-15 (GKPNVGKS), 55-59 (DSGGL), 116-119 (NKVD), 202-209 (GRVNVGKS), 249-253 (DTAGI), and 313-316 (NKWD). One can recognise a KH-like domain in the interval 369-453 (QKIQTSKLNT…PLVIASRKKG (85 aa)).

The protein belongs to the TRAFAC class TrmE-Era-EngA-EngB-Septin-like GTPase superfamily. EngA (Der) GTPase family. Associates with the 50S ribosomal subunit.

Functionally, GTPase that plays an essential role in the late steps of ribosome biogenesis. This chain is GTPase Der, found in Campylobacter jejuni subsp. jejuni serotype O:2 (strain ATCC 700819 / NCTC 11168).